A 145-amino-acid polypeptide reads, in one-letter code: Large ribosomal subunit protein uL14m (145 aa).

The N-terminal 30 residues, 1–30 (MAFSSGLWGPCVHMSRAFSQRCFSTTGSLG), are a transit peptide targeting the mitochondrion.

Belongs to the universal ribosomal protein uL14 family. Component of the mitochondrial ribosome large subunit (39S) which comprises a 16S rRNA and about 50 distinct proteins. Interacts with MALSU1.

It localises to the mitochondrion. Its function is as follows. May form part of 2 intersubunit bridges in the assembled ribosome. Upon binding to MALSU1, intersubunit bridge formation is blocked, preventing ribosome formation and repressing translation. In Bos taurus (Bovine), this protein is Large ribosomal subunit protein uL14m (MRPL14).